The following is an 84-amino-acid chain: Large ribosomal subunit protein bL27 (84 aa).

The segment at Met-1–Lys-24 is disordered. A compositionally biased stretch (polar residues) spans Ser-9–Arg-20.

It belongs to the bacterial ribosomal protein bL27 family.

The protein is Large ribosomal subunit protein bL27 of Nocardioides sp. (strain ATCC BAA-499 / JS614).